Here is a 180-residue protein sequence, read N- to C-terminus: E1B protein, small T-antigen (180 aa).

Residues 142 to 180 (GPAAPLARQGSQQEEQQQRQEEEQVQEEMRSGLDPPTEN) form a disordered region. The span at 157-172 (QQQRQEEEQVQEEMRS) shows a compositional bias: basic and acidic residues.

This sequence belongs to the adenoviridae E1B 19 kDa protein family.

This is E1B protein, small T-antigen from Simian adenovirus serotype 7 (SAdV-7).